Consider the following 151-residue polypeptide: MMALLQRVTRARVTVDGATTGEIGTGLLALVCAEQGDTEAEADKLLAKLLKLRVFADEGGRMNRSLQEVGGGLLVVSQFTLAADTSGGNRPSFANAAPADTGRALYEHFVARARAQHGEVATGRFGAMMQVELVNDGPVTIPLRIPPASAA.

Positions 137-138 (GP) match the Gly-cisPro motif, important for rejection of L-amino acids motif.

The protein belongs to the DTD family. Homodimer.

The protein localises to the cytoplasm. The catalysed reaction is glycyl-tRNA(Ala) + H2O = tRNA(Ala) + glycine + H(+). It catalyses the reaction a D-aminoacyl-tRNA + H2O = a tRNA + a D-alpha-amino acid + H(+). Functionally, an aminoacyl-tRNA editing enzyme that deacylates mischarged D-aminoacyl-tRNAs. Also deacylates mischarged glycyl-tRNA(Ala), protecting cells against glycine mischarging by AlaRS. Acts via tRNA-based rather than protein-based catalysis; rejects L-amino acids rather than detecting D-amino acids in the active site. By recycling D-aminoacyl-tRNA to D-amino acids and free tRNA molecules, this enzyme counteracts the toxicity associated with the formation of D-aminoacyl-tRNA entities in vivo and helps enforce protein L-homochirality. The sequence is that of D-aminoacyl-tRNA deacylase from Azoarcus sp. (strain BH72).